We begin with the raw amino-acid sequence, 429 residues long: 3-phosphoshikimate 1-carboxyvinyltransferase (429 aa).

3-phosphoshikimate is bound by residues K22, S23, and R27. K22 is a phosphoenolpyruvate binding site. G94 and R122 together coordinate phosphoenolpyruvate. The 3-phosphoshikimate site is built by S167, Q169, D315, and K342. Q169 is a binding site for phosphoenolpyruvate. The Proton acceptor role is filled by D315. The phosphoenolpyruvate site is built by R346 and R388.

It belongs to the EPSP synthase family. As to quaternary structure, monomer.

Its subcellular location is the cytoplasm. The catalysed reaction is 3-phosphoshikimate + phosphoenolpyruvate = 5-O-(1-carboxyvinyl)-3-phosphoshikimate + phosphate. It functions in the pathway metabolic intermediate biosynthesis; chorismate biosynthesis; chorismate from D-erythrose 4-phosphate and phosphoenolpyruvate: step 6/7. Catalyzes the transfer of the enolpyruvyl moiety of phosphoenolpyruvate (PEP) to the 5-hydroxyl of shikimate-3-phosphate (S3P) to produce enolpyruvyl shikimate-3-phosphate and inorganic phosphate. The polypeptide is 3-phosphoshikimate 1-carboxyvinyltransferase (Geobacter sulfurreducens (strain ATCC 51573 / DSM 12127 / PCA)).